We begin with the raw amino-acid sequence, 86 residues long: Beta-toxin To4 (86 aa).

The signal sequence occupies residues 1-20; the sequence is MTRFVLFISCFFLIGMIVEC. The region spanning 21 to 83 is the LCN-type CS-alpha/beta domain; sequence KDGYLMEYGG…IWNRATNKCG (63 aa). Intrachain disulfides connect Cys-31-Cys-82, Cys-35-Cys-57, Cys-43-Cys-63, and Cys-47-Cys-65. Cys-82 carries the cysteine amide modification.

This sequence belongs to the long (4 C-C) scorpion toxin superfamily. Sodium channel inhibitor family. Beta subfamily. As to expression, expressed by the venom gland.

The protein resides in the secreted. Its function is as follows. Beta toxins bind voltage-independently at site-4 of sodium channels (Nav) and shift the voltage of activation toward more negative potentials thereby affecting sodium channel activation and promoting spontaneous and repetitive firing. This toxin shows moderate inhibition of Nav1.1/SCN1A, Nav1.2/SCN2A, and Nav1.4/SCN4A, and promotes a left voltage shift on these channels. It exhibits similar potency on Nav1.2/SCN2A and Nav1.4/SCN4A (40-50% peak current inhibition at 0.5 uM), and weaker inhibition on Nav1.2 (20-30% peak current inhibition at 0.5 uM). This chain is Beta-toxin To4, found in Tityus obscurus (Amazonian scorpion).